The sequence spans 2025 residues: E3 ubiquitin-protein ligase TRIP12 (2025 aa).

Residues 1–10 (MSNRPNNNPG) show a composition bias toward polar residues. Residues 1 to 404 (MSNRPNNNPG…SGESESDDSE (404 aa)) are disordered. The residue at position 2 (Ser2) is an N-acetylserine. Position 12 is a phosphoserine (Ser12). Over residues 18–27 (RNTAGAQPQD) the composition is skewed to polar residues. Positions 48 to 70 (DPDRANTSERQKTGQVPKKDNSR) are enriched in basic and acidic residues. Residues Ser77, Ser85, and Ser100 each carry the phosphoserine modification. Polar residues-rich tracts occupy residues 78–88 (PDYNRTNSPSS), 99–108 (ESLSETNKPP), and 119–132 (EQQLKSAQLPSTSK). Composition is skewed to low complexity over residues 154–166 (SSCVKSGSGSEST) and 175–216 (PTKL…SSTV). Residue Lys181 is modified to N6-acetyllysine. Residues 280 to 290 (PGSSKSETSKP) are compositionally biased toward polar residues. Phosphoserine occurs at positions 310 and 312. Over residues 326-338 (QKTTGSCASTSRR) the composition is skewed to polar residues. A compositionally biased stretch (basic and acidic residues) spans 346-358 (GAAEARRQEKMAD). Over residues 362–371 (NQETVNSSAA) the composition is skewed to polar residues. A compositionally biased stretch (low complexity) spans 379–397 (GAAASSSVAGAVGMTTSGE). The WWE domain maps to 755–869 (MLKKGNAQNT…DPELAKSFIK (115 aa)). Residues 970–1077 (ESLLTSPPKA…QSPKSSFLAS (108 aa)) form a disordered region. The residue at position 975 (Ser975) is a Phosphoserine. Residues 983 to 1006 (GSGSLGSTTPASSGTATAATNASA) are compositionally biased toward low complexity. A phosphoserine mark is found at Ser1024 and Ser1030. The segment covering 1034-1047 (KRKRLPKRGPRRPK) has biased composition (basic residues). At Ser1049 the chain carries Phosphoserine. Over residues 1050 to 1059 (PPRDDDKVDN) the composition is skewed to basic and acidic residues. The segment covering 1062 to 1073 (KSPTTTQSPKSS) has biased composition (low complexity). Phosphoserine is present on residues Ser1063, Ser1350, Ser1355, Ser1362, and Ser1409. Position 1410 is a phosphothreonine (Thr1410). 2 disordered regions span residues 1440–1466 (SSKDCVGGKRGRAQTAPTKTSPRNAKK) and 1601–1620 (TNPEINQSDSQDSRVAPRLD). N6-acetyllysine is present on Lys1458. Ser1460 bears the Phosphoserine mark. Residues 1529-1603 (EIIPTSEFIN…AMQRLLDTNP (75 aa)) are K-box. Positions 1918–2025 (PDHGYTHDSR…REGQQSFHLS (108 aa)) constitute an HECT domain. Residue Cys1992 is the Glycyl thioester intermediate of the active site.

Belongs to the UPL family. K-HECT subfamily. As to quaternary structure, interacts with MYC; leading to disrupt interaction with isoform p19ARF/ARF of CDKN2A. Interacts with TRADD; leading to disrupt interaction with isoform p19ARF/ARF of CDKN2A. Interacts with SMARCC1; leading to disrupt interaction with SMARCE1.

The protein localises to the nucleus. It is found in the nucleoplasm. It carries out the reaction S-ubiquitinyl-[E2 ubiquitin-conjugating enzyme]-L-cysteine + [acceptor protein]-L-lysine = [E2 ubiquitin-conjugating enzyme]-L-cysteine + N(6)-ubiquitinyl-[acceptor protein]-L-lysine.. Its pathway is protein modification; protein ubiquitination. Its function is as follows. E3 ubiquitin-protein ligase involved in ubiquitin fusion degradation (UFD) pathway and regulation of DNA repair. Part of the ubiquitin fusion degradation (UFD) pathway, a process that mediates ubiquitination of protein at their N-terminus, regardless of the presence of lysine residues in target proteins. Acts as a key regulator of DNA damage response by acting as a suppressor of RNF168, an E3 ubiquitin-protein ligase that promotes accumulation of 'Lys-63'-linked histone H2A and H2AX at DNA damage sites, thereby acting as a guard against excessive spreading of ubiquitinated chromatin at damaged chromosomes. In normal cells, mediates ubiquitination and degradation of isoform p19ARF/ARF of CDKN2A, a lysine-less tumor suppressor required for p53/TP53 activation under oncogenic stress. In cancer cells, however, isoform p19ARF/ARF and TRIP12 are located in different cell compartments, preventing isoform p19ARF/ARF ubiquitination and degradation. Does not mediate ubiquitination of isoform p16-INK4a of CDKN2A. Also catalyzes ubiquitination of NAE1 and SMARCE1, leading to their degradation. Ubiquitination and degradation of target proteins is regulated by interaction with proteins such as MYC, TRADD or SMARCC1, which disrupt the interaction between TRIP12 and target proteins. Mediates ubiquitination of ASXL1: following binding to N(6)-methyladenosine methylated DNA, ASXL1 is ubiquitinated by TRIP12, leading to its degradation and subsequent inactivation of the PR-DUB complex. In Rattus norvegicus (Rat), this protein is E3 ubiquitin-protein ligase TRIP12 (Trip12).